The chain runs to 253 residues: NAD-dependent protein deacetylase (253 aa).

A Deacetylase sirtuin-type domain is found at 3 to 253; sequence APSLSSGVEQ…GETLGPFVGN (251 aa). Residues Ala-29, Thr-33, Phe-40, Arg-41, Gln-106, Ile-108, Asp-109, and His-126 each contribute to the NAD(+) site. Phe-40 contributes to the nicotinamide binding site. Nicotinamide is bound by residues Ile-108 and Asp-109. The Proton acceptor role is filled by His-126. Cys-134, Cys-137, Cys-159, and Cys-162 together coordinate Zn(2+). NAD(+) is bound by residues Ser-200, Ser-201, Asn-225, Asp-242, and Ile-243.

The protein belongs to the sirtuin family. Class U subfamily. It depends on Zn(2+) as a cofactor.

The protein resides in the cytoplasm. It catalyses the reaction N(6)-acetyl-L-lysyl-[protein] + NAD(+) + H2O = 2''-O-acetyl-ADP-D-ribose + nicotinamide + L-lysyl-[protein]. Its function is as follows. NAD-dependent protein deacetylase which modulates the activities of several enzymes which are inactive in their acetylated form. The protein is NAD-dependent protein deacetylase of Rhodopseudomonas palustris (strain ATCC BAA-98 / CGA009).